We begin with the raw amino-acid sequence, 211 residues long: Nucleoside triphosphate pyrophosphatase (211 aa).

Aspartate 78 serves as the catalytic Proton acceptor.

Belongs to the Maf family. It depends on a divalent metal cation as a cofactor.

It localises to the cytoplasm. The enzyme catalyses a ribonucleoside 5'-triphosphate + H2O = a ribonucleoside 5'-phosphate + diphosphate + H(+). It catalyses the reaction a 2'-deoxyribonucleoside 5'-triphosphate + H2O = a 2'-deoxyribonucleoside 5'-phosphate + diphosphate + H(+). In terms of biological role, nucleoside triphosphate pyrophosphatase. May have a dual role in cell division arrest and in preventing the incorporation of modified nucleotides into cellular nucleic acids. This Mycolicibacterium smegmatis (strain ATCC 700084 / mc(2)155) (Mycobacterium smegmatis) protein is Nucleoside triphosphate pyrophosphatase.